A 122-amino-acid chain; its full sequence is NADH-quinone oxidoreductase subunit A (122 aa).

Transmembrane regions (helical) follow at residues 12–32 (ILLFILVGLAIGVLSMLAGWL), 67–87 (IAILFILFDLEIAFLFPWAVV), and 91–111 (IGWFGFVAMLVFLGLLVVGFI).

This sequence belongs to the complex I subunit 3 family. In terms of assembly, NDH-1 is composed of 14 different subunits. Subunits NuoA, H, J, K, L, M, N constitute the membrane sector of the complex.

Its subcellular location is the cell inner membrane. The catalysed reaction is a quinone + NADH + 5 H(+)(in) = a quinol + NAD(+) + 4 H(+)(out). NDH-1 shuttles electrons from NADH, via FMN and iron-sulfur (Fe-S) centers, to quinones in the respiratory chain. The immediate electron acceptor for the enzyme in this species is believed to be ubiquinone. Couples the redox reaction to proton translocation (for every two electrons transferred, four hydrogen ions are translocated across the cytoplasmic membrane), and thus conserves the redox energy in a proton gradient. The sequence is that of NADH-quinone oxidoreductase subunit A from Nitrosomonas europaea (strain ATCC 19718 / CIP 103999 / KCTC 2705 / NBRC 14298).